Reading from the N-terminus, the 453-residue chain is MSPQTETKAGVGFKAGVKEYKLTYYTPEYETKDTDILAAFRVTPQPGVPPEERGAAVAAESSTGTWTTVWTDGLTSLDRYKGRCYHIEPVPGEEDQFIAYVAYPLDLFEEGSVTNMFTSIVGNVFGFKALRALRLEDLRIPVAYVKTFQGPPHGIQVERDKLNKYGRPLLGCTIKPKLGLSAKNYGRAVYECLRGGLDFTKDDENVNSQPFMRWRDRFLFCAEAIYKSQAETGEIKGHYLNATAGTCEEMIKRAVFARELGVPIVMHDYLTGGFTANTSLSHYCRDNGLLLHIHRAMHAVIDRQKNHGMHFRVLAKALRMSGGDHIHSGTVVGKLEGERDITLGFVDLLRDDYIEKDRSRGIYFTQDWVSLPGVLPVASRGIHVWHMPALTEIFGDDSVLQFGGGTLGHPWGNAPGAVANRVALEACVKARNEGRDLASEGGEIIREACKWSP.

Residues 1 to 2 (MS) constitute a propeptide that is removed on maturation. Pro3 bears the N-acetylproline mark. Lys14 bears the N6,N6,N6-trimethyllysine mark. Substrate contacts are provided by Asn123 and Thr173. Lys175 acts as the Proton acceptor in catalysis. Lys177 contributes to the substrate binding site. Mg(2+)-binding residues include Lys201, Asp203, and Glu204. The residue at position 201 (Lys201) is an N6-carboxylysine. His294 serves as the catalytic Proton acceptor. Substrate is bound by residues Arg295, His327, and Ser379.

This sequence belongs to the RuBisCO large chain family. Type I subfamily. In terms of assembly, heterohexadecamer of 8 large chains and 8 small chains; disulfide-linked. The disulfide link is formed within the large subunit homodimers. It depends on Mg(2+) as a cofactor. In terms of processing, the disulfide bond which can form in the large chain dimeric partners within the hexadecamer appears to be associated with oxidative stress and protein turnover.

Its subcellular location is the plastid. The protein resides in the chloroplast. The catalysed reaction is 2 (2R)-3-phosphoglycerate + 2 H(+) = D-ribulose 1,5-bisphosphate + CO2 + H2O. The enzyme catalyses D-ribulose 1,5-bisphosphate + O2 = 2-phosphoglycolate + (2R)-3-phosphoglycerate + 2 H(+). Functionally, ruBisCO catalyzes two reactions: the carboxylation of D-ribulose 1,5-bisphosphate, the primary event in carbon dioxide fixation, as well as the oxidative fragmentation of the pentose substrate in the photorespiration process. Both reactions occur simultaneously and in competition at the same active site. In Galium corsicum, this protein is Ribulose bisphosphate carboxylase large chain.